Consider the following 466-residue polypeptide: MNNSTNSSNNSLALTSPYKTFEVVFIVLVAGSLSLVTIIGNILVMVSIKVNRHLQTVNNYFLFSLACADLIIGVFSMNLYTLYTVIGYWPLGPVVCDLWLALDYVVSNASVMNLLIISFDRYFCVTKPLTYPVKRTTKMAGMMIAAAWVLSFILWAPAILFWQFIVGVRTVEDGECYIQFFSNAAVTFGTAIAAFYLPVIIMTVLYWHISRASKSRIKKDKKEPVANQDPVSPSLVQGRIVKPNNNNMPSSDDGLEHNKIQNGKAPRDPVTENCVQGEEKESSNDSTSVSAVASNMRDDEITQDENTVSTSLGHSKDENSKQTCIRIGTKTPKSDSCTPTNTTVEVVGSSGQNGDEKQNIVARKIVKMTKQPAKKKPPPSREKKVTRTILAILLAFIITWAPYNVMVLINTFCAPCIPNTVWTIGYWLCYINSTINPACYALCNATFKKTFKHLLMCHYKNIGATR.

The Extracellular segment spans residues 1–22 (MNNSTNSSNNSLALTSPYKTFE). N-linked (GlcNAc...) asparagine glycans are attached at residues Asn2, Asn3, Asn6, and Asn9. A helical transmembrane segment spans residues 23 to 45 (VVFIVLVAGSLSLVTIIGNILVM). The Cytoplasmic portion of the chain corresponds to 46–59 (VSIKVNRHLQTVNN). A helical membrane pass occupies residues 60–80 (YFLFSLACADLIIGVFSMNLY). The Extracellular segment spans residues 81 to 97 (TLYTVIGYWPLGPVVCD). Cys96 and Cys176 are disulfide-bonded. The chain crosses the membrane as a helical span at residues 98 to 119 (LWLALDYVVSNASVMNLLIISF). Residues 120 to 122 (DRY) carry the Important for signaling motif. The Cytoplasmic portion of the chain corresponds to 120-139 (DRYFCVTKPLTYPVKRTTKM). A helical transmembrane segment spans residues 140–162 (AGMMIAAAWVLSFILWAPAILFW). Topologically, residues 163–184 (QFIVGVRTVEDGECYIQFFSNA) are extracellular. Residues 185-209 (AVTFGTAIAAFYLPVIIMTVLYWHI) traverse the membrane as a helical segment. The Cytoplasmic portion of the chain corresponds to 210-387 (SRASKSRIKK…PPSREKKVTR (178 aa)). The disordered stretch occupies residues 218-355 (KKDKKEPVAN…VVGSSGQNGD (138 aa)). Phosphoserine is present on Ser232. The span at 254 to 270 (GLEHNKIQNGKAPRDPV) shows a compositional bias: basic and acidic residues. Polar residues-rich tracts occupy residues 284–293 (NDSTSVSAVA), 304–313 (DENTVSTSLG), and 334–353 (SDSC…SGQN). Residues 388–410 (TILAILLAFIITWAPYNVMVLIN) form a helical membrane-spanning segment. The Extracellular portion of the chain corresponds to 411-418 (TFCAPCIP). Cysteines 413 and 416 form a disulfide. A helical membrane pass occupies residues 419 to 442 (NTVWTIGYWLCYINSTINPACYAL). Positions 436 to 440 (NPACY) match the Important for signaling motif. The Cytoplasmic segment spans residues 443-466 (CNATFKKTFKHLLMCHYKNIGATR). 3 positions are modified to phosphothreonine: Thr446, Thr450, and Thr465.

It belongs to the G-protein coupled receptor 1 family. Muscarinic acetylcholine receptor subfamily. CHRM2 sub-subfamily. As to quaternary structure, interacts with ARRB1 and ARRB2. Interacts with RACK1; the interaction regulates CHRM2 internalization. Post-translationally, phosphorylated in response to agonist treatment.

The protein resides in the cell membrane. Its subcellular location is the postsynaptic cell membrane. Its function is as follows. The muscarinic acetylcholine receptor mediates various cellular responses, including inhibition of adenylate cyclase, breakdown of phosphoinositides and modulation of potassium channels through the action of G proteins. Primary transducing effect is adenylate cyclase inhibition. Signaling promotes phospholipase C activity, leading to the release of inositol trisphosphate (IP3); this then triggers calcium ion release into the cytosol. The chain is Muscarinic acetylcholine receptor M2 (CHRM2) from Homo sapiens (Human).